Here is a 304-residue protein sequence, read N- to C-terminus: Ribonuclease Z (304 aa).

Zn(2+)-binding residues include His63, His65, Asp67, His68, His141, Asp208, and His266. Asp67 (proton acceptor) is an active-site residue.

It belongs to the RNase Z family. As to quaternary structure, homodimer. Zn(2+) is required as a cofactor.

The enzyme catalyses Endonucleolytic cleavage of RNA, removing extra 3' nucleotides from tRNA precursor, generating 3' termini of tRNAs. A 3'-hydroxy group is left at the tRNA terminus and a 5'-phosphoryl group is left at the trailer molecule.. Zinc phosphodiesterase, which displays some tRNA 3'-processing endonuclease activity. Probably involved in tRNA maturation, by removing a 3'-trailer from precursor tRNA. In Chlamydia trachomatis serovar D (strain ATCC VR-885 / DSM 19411 / UW-3/Cx), this protein is Ribonuclease Z.